A 304-amino-acid polypeptide reads, in one-letter code: uncharacterized protein (304 aa).

Positions 1–15 (MTRPRPPLGPAMAGA) are cleaved as a signal peptide. Positions 28-151 (NAAASTDADR…LSRWVDSLLS (124 aa)) constitute a Thioredoxin domain.

This is an uncharacterized protein from Mycobacterium bovis (strain ATCC BAA-935 / AF2122/97).